Here is a 332-residue protein sequence, read N- to C-terminus: 2,3-diketo-L-gulonate reductase (332 aa).

His44 acts as the Proton donor in catalysis. NAD(+) is bound by residues 168-174, 224-225, and 304-306; these read ITMVDMS, WK, and GHE.

Belongs to the LDH2/MDH2 oxidoreductase family. DlgD subfamily. In terms of assembly, homodimer.

It localises to the cytoplasm. It catalyses the reaction 3-dehydro-L-gulonate + NAD(+) = 2,3-dioxo-L-gulonate + NADH + H(+). It carries out the reaction 3-dehydro-L-gulonate + NADP(+) = 2,3-dioxo-L-gulonate + NADPH + H(+). Catalyzes the reduction of 2,3-diketo-L-gulonate in the presence of NADH, to form 3-keto-L-gulonate. The protein is 2,3-diketo-L-gulonate reductase of Salmonella newport (strain SL254).